We begin with the raw amino-acid sequence, 265 residues long: Hydroxyethylthiazole kinase (265 aa).

Methionine 43 is a binding site for substrate. Residues lysine 118 and threonine 165 each coordinate ATP. A substrate-binding site is contributed by glycine 192.

The protein belongs to the Thz kinase family. Mg(2+) is required as a cofactor.

It carries out the reaction 5-(2-hydroxyethyl)-4-methylthiazole + ATP = 4-methyl-5-(2-phosphooxyethyl)-thiazole + ADP + H(+). It functions in the pathway cofactor biosynthesis; thiamine diphosphate biosynthesis; 4-methyl-5-(2-phosphoethyl)-thiazole from 5-(2-hydroxyethyl)-4-methylthiazole: step 1/1. Functionally, catalyzes the phosphorylation of the hydroxyl group of 4-methyl-5-beta-hydroxyethylthiazole (THZ). The chain is Hydroxyethylthiazole kinase from Pyrococcus horikoshii (strain ATCC 700860 / DSM 12428 / JCM 9974 / NBRC 100139 / OT-3).